Here is a 1025-residue protein sequence, read N- to C-terminus: Leucyl-cystinyl aminopeptidase (1025 aa).

At methionine 1 the chain carries N-acetylmethionine. Residues 1–110 (MEPFTNDRLQ…GACSVPSART (110 aa)) are Cytoplasmic-facing. The Dileucine internalization motif motif lies at 53–54 (LL). A Phosphotyrosine modification is found at tyrosine 70. The Dileucine internalization motif motif lies at 76 to 77 (LL). Phosphoserine occurs at positions 80 and 91. A tankyrase binding region spans residues 96 to 101 (RQSPDG). The chain crosses the membrane as a helical; Signal-anchor for type II membrane protein span at residues 111–131 (MVVCAFVIVVAVSVIMVIYLL). Over 132 to 1025 (PRCTFTKEGC…KNLKSLTWWL (894 aa)) the chain is Extracellular. Residues asparagine 145, asparagine 184, asparagine 215, asparagine 256, and asparagine 266 are each glycosylated (N-linked (GlcNAc...) asparagine). Substrate is bound at residue glutamate 295. 2 N-linked (GlcNAc...) asparagine glycosylation sites follow: asparagine 368 and asparagine 374. 428 to 432 (GAMEN) provides a ligand contact to substrate. Asparagine 448 carries N-linked (GlcNAc...) asparagine glycosylation. Residue histidine 464 participates in Zn(2+) binding. Catalysis depends on glutamate 465, which acts as the Proton acceptor. Zn(2+) is bound by residues histidine 468 and glutamate 487. N-linked (GlcNAc...) asparagine glycans are attached at residues asparagine 525, asparagine 578, asparagine 598, asparagine 664, asparagine 682, asparagine 760, asparagine 834, asparagine 850, and asparagine 989.

Belongs to the peptidase M1 family. As to quaternary structure, homodimer. Binds tankyrases 1 and 2. Zn(2+) serves as cofactor. In terms of processing, the pregnancy serum form is derived from the membrane-bound form by proteolytic processing. N-glycosylated. As to expression, highly expressed in placenta, heart, kidney and small intestine. Detected at lower levels in neuronal cells in the brain, in skeletal muscle, spleen, liver, testes and colon.

It is found in the cell membrane. The protein resides in the secreted. The enzyme catalyses Release of an N-terminal amino acid, Cys-|-Xaa-, in which the half-cystine residue is involved in a disulfide loop, notably in oxytocin or vasopressin. Hydrolysis rates on a range of aminoacyl arylamides exceed that for the cystinyl derivative, however.. Release of an N-terminal amino acid, cleaves before cysteine, leucine as well as other amino acids. Degrades peptide hormones such as oxytocin, vasopressin and angiotensin III, and plays a role in maintaining homeostasis during pregnancy. May be involved in the inactivation of neuronal peptides in the brain. Cleaves Met-enkephalin and dynorphin. Binds angiotensin IV and may be the angiotensin IV receptor in the brain. The polypeptide is Leucyl-cystinyl aminopeptidase (LNPEP) (Homo sapiens (Human)).